A 92-amino-acid polypeptide reads, in one-letter code: Small ribosomal subunit protein uS19 (92 aa).

It belongs to the universal ribosomal protein uS19 family.

Its function is as follows. Protein S19 forms a complex with S13 that binds strongly to the 16S ribosomal RNA. This is Small ribosomal subunit protein uS19 from Treponema denticola (strain ATCC 35405 / DSM 14222 / CIP 103919 / JCM 8153 / KCTC 15104).